Reading from the N-terminus, the 283-residue chain is ATP phosphoribosyltransferase (283 aa).

It belongs to the ATP phosphoribosyltransferase family. Long subfamily. Mg(2+) is required as a cofactor.

It is found in the cytoplasm. The enzyme catalyses 1-(5-phospho-beta-D-ribosyl)-ATP + diphosphate = 5-phospho-alpha-D-ribose 1-diphosphate + ATP. Its pathway is amino-acid biosynthesis; L-histidine biosynthesis; L-histidine from 5-phospho-alpha-D-ribose 1-diphosphate: step 1/9. Its activity is regulated as follows. Feedback inhibited by histidine. Its function is as follows. Catalyzes the condensation of ATP and 5-phosphoribose 1-diphosphate to form N'-(5'-phosphoribosyl)-ATP (PR-ATP). Has a crucial role in the pathway because the rate of histidine biosynthesis seems to be controlled primarily by regulation of HisG enzymatic activity. The polypeptide is ATP phosphoribosyltransferase (Azobacteroides pseudotrichonymphae genomovar. CFP2).